We begin with the raw amino-acid sequence, 327 residues long: Interleukin-12 subunit beta (327 aa).

A signal peptide spans 1–22 (MCHQKLTISWFAMVLLVSPLMA). Residues 23–106 (IWELEKDVYV…LSHSRLLLHK (84 aa)) enclose the Ig-like C2-type domain. Cysteine 50 and cysteine 90 form a disulfide bridge. Asparagine 125, asparagine 135, asparagine 223, and asparagine 315 each carry an N-linked (GlcNAc...) asparagine glycan. The Fibronectin type-III domain maps to 238 to 327 (PPKNLQLKPL…WSEWASVSCN (90 aa)).

This sequence belongs to the IL-12B family. In terms of assembly, heterodimer with IL12A; disulfide-linked. The heterodimer is known as interleukin IL-12. Heterodimer with IL23A; disulfide-linked. The heterodimer is known as interleukin IL-23. Also secreted as a monomer. Interacts with NBR1; this interaction promotes IL-12 secretion.

The protein localises to the secreted. Its function is as follows. Cytokine that can act as a growth factor for activated T and NK cells, enhance the lytic activity of NK/lymphokine-activated killer cells, and stimulate the production of IFN-gamma by resting PBMC. Associates with IL23A to form the IL-23 interleukin, a heterodimeric cytokine which functions in innate and adaptive immunity. IL-23 may constitute with IL-17 an acute response to infection in peripheral tissues. IL-23 binds to a heterodimeric receptor complex composed of IL12RB1 and IL23R, activates the Jak-Stat signaling cascade, stimulates memory rather than naive T-cells and promotes production of pro-inflammatory cytokines. IL-23 induces autoimmune inflammation and thus may be responsible for autoimmune inflammatory diseases and may be important for tumorigenesis. In Sigmodon hispidus (Hispid cotton rat), this protein is Interleukin-12 subunit beta (IL12B).